Reading from the N-terminus, the 288-residue chain is Pyrroline-5-carboxylate reductase 3 (288 aa).

This sequence belongs to the pyrroline-5-carboxylate reductase family. As to quaternary structure, homodecamer; composed of 5 homodimers.

It is found in the cytoplasm. It catalyses the reaction L-proline + NADP(+) = (S)-1-pyrroline-5-carboxylate + NADPH + 2 H(+). The catalysed reaction is L-proline + NAD(+) = (S)-1-pyrroline-5-carboxylate + NADH + 2 H(+). Its pathway is amino-acid biosynthesis; L-proline biosynthesis; L-proline from L-glutamate 5-semialdehyde: step 1/1. In terms of biological role, oxidoreductase that catalyzes the last step in proline biosynthesis, which corresponds to the reduction of pyrroline-5-carboxylate (P5C) to L-proline using NAD(P)H. Proline is synthesized from either glutamate or ornithine; both are converted to P5C, and then to proline via pyrroline-5-carboxylate reductases (PYCRs). PYCR3 is exclusively linked to the biosynthesis of proline from ornithine. The sequence is that of Pyrroline-5-carboxylate reductase 3 from Danio rerio (Zebrafish).